Here is a 136-residue protein sequence, read N- to C-terminus: Protein NrdI (136 aa).

Belongs to the NrdI family.

Functionally, probably involved in ribonucleotide reductase function. The sequence is that of Protein NrdI from Salmonella arizonae (strain ATCC BAA-731 / CDC346-86 / RSK2980).